The following is a 515-amino-acid chain: MNKTIAVIGAGLSGIAAVKQLTDGGHQVTCFEKAESFGGVFADKKIYDDLHLTISNYFMAYSDYVPNHQKLKFWSKKEYINYLGEYIERFDIAKHIHYDHEVCCVQKQGDKWLVTYKNADTEQTKEFDMVAVCSGHFQKPKLPDLPGLDMYQGNIEHSNDYRDKHNYAGKRVLCVGLGESSADITSEISQVARKCILSLRRYPAVAPRYMAFQEDPYFTIDTSWLTSRIVNKLPHRYHGGITKGIFNKYVTSRNDHVRIRGEWLKKSGPSHHQAVTKNERLFRPIADGKVTPNIGGIERFEKNAVVFKDGTREEIDAVVFCTGYQLSFPFLDVSIANMRDLYKQMFIPEMGHSLSFIGFVRPQQGGIPVIAEMQCRYLSKLASGEAQLPTLSEMHDVIKYDTKHWQTEYKITPHVASLVNYCHYMDSVAKLVGCMPQIPSLFKDPMLRVKLLHNPQFAAQYRLDGPNNMTHTAREFLLSFPNISSWPRIIHFEVALAAQKLLSRLRLDGLREISK.

Residues serine 13, glutamate 32, valine 40, phenylalanine 41, histidine 51, valine 102, and glutamine 364 each coordinate FAD.

The protein belongs to the FMO family. The cofactor is FAD.

The catalysed reaction is 2 bromide + 4-hydroxybenzoate + 2 NADPH + 2 O2 + 5 H(+) = 2,4-dibromophenol + CO2 + 2 NADP(+) + 4 H2O. It carries out the reaction bromide + 4-hydroxybenzoate + NADPH + O2 + 2 H(+) = 3-bromo-4-hydroxybenzoate + NADP(+) + 2 H2O. It catalyses the reaction 3-bromo-4-hydroxybenzoate + bromide + NADPH + O2 + 3 H(+) = 2,4-dibromophenol + CO2 + NADP(+) + 2 H2O. The enzyme catalyses 3,4-dihydroxybenzoate + 2 bromide + 2 NADPH + 2 O2 + 5 H(+) = 3,5-dibromobenzene-1,2-diol + CO2 + 2 NADP(+) + 4 H2O. The catalysed reaction is 3,4-dihydroxybenzoate + bromide + NADPH + O2 + 2 H(+) = 3-bromo-4,5-dihydroxybenzoate + NADP(+) + 2 H2O. It carries out the reaction 3-bromo-4,5-dihydroxybenzoate + bromide + NADPH + O2 + 3 H(+) = 3,5-dibromobenzene-1,2-diol + CO2 + NADP(+) + 2 H2O. Its activity is regulated as follows. Activity is abolished in the absence of either bromide or NADPH, while a partial reduction in activity is observed upon omission of FAD. Activity does not require the addition of a flavin reductase to regenerate FADH(2) in situ. Brominase involved in the biosynthesis of polybrominated aromatic organic compounds. Catalyzes the bromination of 4-hydroxybenzoate (4-HBA) to 3-bromo-4-hydroxybenzoate, followed by bromination and decarboxylation of 3-bromo-4-hydroxybenzoate to 2,4-dibromophenol. Can also use 3,4-dihydroxybenzoate, with lower efficiency, forming 3-bromo-4,5-dihydroxybenzoate and 3,5-dibromobenzene-1,2-diol. Can utilize iodide in vivo leading to the formation of iodophenols, but cannot use chloride. This is 4-hydroxybenzoate brominase (decarboxylating) from Pseudoalteromonas luteoviolacea (strain 2ta16).